Reading from the N-terminus, the 178-residue chain is MEQYHGTTIVSVRRGNQVALGGDGQVTLGNIVMKGTARKVRRIYNGKVLVGFAGSTADAFSLLDRFEAKLEKYQGNLTRAAVDLAKDWRSDRALRRLEAMLITADRDTTLVITGNGDVLDPEGGIAAIGSGGAYAQSAAKALMENTEMAPKDVVEKALTIAGELCIYTNTNFVIETLE.

Residue T7 is part of the active site. G162, C165, and T168 together coordinate Na(+).

The protein belongs to the peptidase T1B family. HslV subfamily. As to quaternary structure, a double ring-shaped homohexamer of HslV is capped on each side by a ring-shaped HslU homohexamer. The assembly of the HslU/HslV complex is dependent on binding of ATP.

It localises to the cytoplasm. The catalysed reaction is ATP-dependent cleavage of peptide bonds with broad specificity.. With respect to regulation, allosterically activated by HslU binding. In terms of biological role, protease subunit of a proteasome-like degradation complex believed to be a general protein degrading machinery. The protein is ATP-dependent protease subunit HslV of Cupriavidus taiwanensis (strain DSM 17343 / BCRC 17206 / CCUG 44338 / CIP 107171 / LMG 19424 / R1) (Ralstonia taiwanensis (strain LMG 19424)).